A 340-amino-acid chain; its full sequence is Eukaryotic translation initiation factor 3 subunit I (340 aa).

WD repeat units lie at residues 8–47, 50–91, 150–189, 194–233, and 291–330; these read GHER…RLGT, GHQG…KVWD, CTES…QLEN, EFDH…ILKT, and GHFG…FDFM.

This sequence belongs to the eIF-3 subunit I family. As to quaternary structure, component of the eukaryotic translation initiation factor 3 (eIF-3) complex.

The protein resides in the cytoplasm. In terms of biological role, component of the eukaryotic translation initiation factor 3 (eIF-3) complex, which is involved in protein synthesis of a specialized repertoire of mRNAs and, together with other initiation factors, stimulates binding of mRNA and methionyl-tRNAi to the 40S ribosome. The eIF-3 complex specifically targets and initiates translation of a subset of mRNAs involved in cell proliferation. This is Eukaryotic translation initiation factor 3 subunit I (tif34) from Neosartorya fischeri (strain ATCC 1020 / DSM 3700 / CBS 544.65 / FGSC A1164 / JCM 1740 / NRRL 181 / WB 181) (Aspergillus fischerianus).